Reading from the N-terminus, the 395-residue chain is Aurora kinase A (395 aa).

The tract at residues 1-114 (MDRCKENCVS…QASLQKTEDT (114 aa)) is disordered. Composition is skewed to polar residues over residues 29–60 (QIPSQNLGSASSGQAQRVLCPSNSQRVPSQAQ) and 84–99 (RLNNPQKNEQPAASGN). 2 positions are modified to phosphoserine: S40 and S50. Over residues 100-114 (DSEKEQASLQKTEDT) the composition is skewed to basic and acidic residues. The Protein kinase domain maps to 124 to 374 (FDIGRPLGKG…LAEVLEHPWI (251 aa)). ATP-binding positions include K134, K153, and 201–204 (LEYA). D247 (proton acceptor) is an active-site residue. K249 is covalently cross-linked (Glycyl lysine isopeptide (Lys-Gly) (interchain with G-Cter in SUMO2)). Residues 251 to 252 (EN) and D265 contribute to the ATP site. The interval 271 to 284 (HAPSSRRTTMCGTL) is activation segment. Phosphothreonine is present on residues T278 and T279. At S333 the chain carries Phosphoserine; by PKA and PAK. The span at 376-385 (ANSSKPPTGH) shows a compositional bias: polar residues. The disordered stretch occupies residues 376-395 (ANSSKPPTGHTSKEPTSKSS). Over residues 386–395 (TSKEPTSKSS) the composition is skewed to basic and acidic residues.

It belongs to the protein kinase superfamily. Ser/Thr protein kinase family. Aurora subfamily. As to quaternary structure, part of a complex composed of NEDD9, AURKA and CTTN; within the complex NEDD9 acts as a scaffold protein and is required for complex formation. Identified in a complex with AUNIP and NIN. Interacts with CPEB1, JTB, TACC1, TPX2, PPP2CA, as well as with the protein phosphatase type 1 (PP1) isoforms PPP1CA, PPP1CB and PPP1CC. Also interacts with its substrates ARHGEF2, BORA, KIF2A, PARD3, and p53/TP53. Interaction with BORA promotes phosphorylation of PLK1. Interacts with GADD45A, competing with its oligomerization. Interacts with FBXL7 and CIMAP3. Interacts (via C-terminus) with AUNIP (via C-terminus). Interacts with SIRT2. Interacts with FRY; this interaction facilitates AURKA-mediated PLK1 phosphorylation. Interacts with MYCN; interaction is phospho-independent and triggers AURKA activation; AURKA competes with FBXW7 for binding to unphosphorylated MYCN but not for binding to phosphorylated MYCN. Interacts with HNRNPU. Interacts with AAAS. Interacts with KLHL18 and CUL3. Interacts with FOXP1. Interacts with HDAC6; AURKA-mediated phosphorylation of HDAC6 promotes deacetylation of alpha-tubulin. Post-translationally, activated by phosphorylation at Thr-279; this brings about a change in the conformation of the activation segment. Phosphorylation at Thr-279 varies during the cell cycle and is highest during M phase. Autophosphorylated at Thr-279 upon TPX2 binding. Thr-279 can be phosphorylated by several kinases, including PAK and PKA. Protein phosphatase type 1 (PP1) binds AURKA and inhibits its activity by dephosphorylating Thr-279 during mitosis. Phosphorylation at Ser-333 decreases the kinase activity. PPP2CA controls degradation by dephosphorylating Ser-52 at the end of mitosis. In terms of processing, ubiquitinated by the anaphase-promoting complex (APC), leading to its degradation by the proteasome. Ubiquitinated by CHFR, leading to its degradation by the proteasome. Ubiquitinated by the E3 ubiquitin-protein ligase complex SCF(FBXL7) during mitosis, leading to its degradation by the proteasome. As to expression, detected in embryonic neurons in dorsal root ganglia and brain cortex (at protein level). Highly expressed in testis, in about one third of the seminiferous tubules. Expression is restricted to specific spermatocytes nearing completion of prophase, with levels falling off on transition to elongated spermatids. Highly expressed in the ovary, expression in the oocyte starts around the transition to large growing follicle. Abundant expression is seen in the proliferating granulosa and thecal cells of the growing follicle, and in the young corpus luteum. Very weakly expressed in spleen and intestine.

Its subcellular location is the cytoplasm. It is found in the cytoskeleton. The protein localises to the microtubule organizing center. It localises to the centrosome. The protein resides in the spindle pole. Its subcellular location is the centriole. It is found in the cell projection. The protein localises to the neuron projection. It localises to the cilium. The protein resides in the cilium basal body. Its subcellular location is the basolateral cell membrane. It catalyses the reaction L-seryl-[protein] + ATP = O-phospho-L-seryl-[protein] + ADP + H(+). It carries out the reaction L-threonyl-[protein] + ATP = O-phospho-L-threonyl-[protein] + ADP + H(+). Activation of CDK1, appears to be an upstream event of AURKA activation. Phosphatase inhibitor-2 (PPP1R2) and TPX2 act also as activators. Inactivated by the G2 checkpoint. Inhibited by GADD45A and p53/TP53, and through dephosphorylation by protein phosphatase type 1 (PP1). MLN8054 is also a potent and selective inhibitor. Activated during the early phase of cilia disassembly in the presence of CIMAP3. Inhibited by the small molecule inhibitor VX-680. Its function is as follows. Mitotic serine/threonine kinase that contributes to the regulation of cell cycle progression. Associates with the centrosome and the spindle microtubules during mitosis and plays a critical role in various mitotic events including the establishment of mitotic spindle, centrosome duplication, centrosome separation as well as maturation, chromosomal alignment, spindle assembly checkpoint, and cytokinesis. Required for normal spindle positioning during mitosis and for the localization of NUMA1 and DCTN1 to the cell cortex during metaphase. Required for initial activation of CDK1 at centrosomes. Phosphorylates numerous target proteins, including ARHGEF2, BORA, BRCA1, CDC25B, DLGP5, HDAC6, KIF2A, LATS2, NDEL1, PARD3, PPP1R2, PLK1, RASSF1, TACC3, p53/TP53 and TPX2. Phosphorylates MCRS1 which is required for MCRS1-mediated kinetochore fiber assembly and mitotic progression. Regulates KIF2A tubulin depolymerase activity. Required for normal axon formation. Plays a role in microtubule remodeling during neurite extension. Important for microtubule formation and/or stabilization. Also acts as a key regulatory component of the p53/TP53 pathway, and particularly the checkpoint-response pathways critical for oncogenic transformation of cells, by phosphorylating and destabilizing p53/TP53. Phosphorylates its own inhibitors, the protein phosphatase type 1 (PP1) isoforms, to inhibit their activity. Inhibits cilia outgrowth. Required for cilia disassembly via phosphorylation of HDAC6 and subsequent deacetylation of alpha-tubulin. Regulates protein levels of the anti-apoptosis protein BIRC5 by suppressing the expression of the SCF(FBXL7) E3 ubiquitin-protein ligase substrate adapter FBXL7 through the phosphorylation of the transcription factor FOXP1. The chain is Aurora kinase A (Aurka) from Mus musculus (Mouse).